Reading from the N-terminus, the 324-residue chain is 2-oxoisovalerate dehydrogenase subunit beta (324 aa).

Residues glutamate 29, 58–60 (LSE), glutamine 82, and 86–89 (YIFP) each bind thiamine diphosphate. Residues 83–86 (FADY) and histidine 129 contribute to the substrate site. Histidine 129 functions as the Proton acceptor in the catalytic mechanism.

Heterotetramer of two alpha and two beta chains. Directly associated with ODBA in the E1 complex. Requires thiamine diphosphate as cofactor.

It catalyses the reaction N(6)-[(R)-lipoyl]-L-lysyl-[protein] + 3-methyl-2-oxobutanoate + H(+) = N(6)-[(R)-S(8)-2-methylpropanoyldihydrolipoyl]-L-lysyl-[protein] + CO2. Its function is as follows. The branched-chain alpha-keto dehydrogenase complex catalyzes the overall conversion of alpha-keto acids to acyl-CoA and CO(2). It contains multiple copies of three enzymatic components: branched-chain alpha-keto acid decarboxylase (E1), lipoamide acyltransferase (E2) and lipoamide dehydrogenase (E3). The sequence is that of 2-oxoisovalerate dehydrogenase subunit beta from Thermus thermophilus (strain ATCC BAA-163 / DSM 7039 / HB27).